A 572-amino-acid chain; its full sequence is Urease subunit alpha (572 aa).

Positions 134–572 constitute a Urease domain; the sequence is AGIDSHIHLI…AAMNQRYFFG (439 aa). Ni(2+) is bound by residues His-139, His-141, and Lys-222. An N6-carboxylysine modification is found at Lys-222. His-224 serves as a coordination point for substrate. Residues His-251 and His-277 each contribute to the Ni(2+) site. His-325 (proton donor) is an active-site residue. Ni(2+) is bound at residue Asp-365.

Belongs to the metallo-dependent hydrolases superfamily. Urease alpha subunit family. In terms of assembly, heterotrimer of UreA (gamma), UreB (beta) and UreC (alpha) subunits. Three heterotrimers associate to form the active enzyme. Ni cation is required as a cofactor. In terms of processing, carboxylation allows a single lysine to coordinate two nickel ions.

The protein localises to the cytoplasm. It carries out the reaction urea + 2 H2O + H(+) = hydrogencarbonate + 2 NH4(+). The protein operates within nitrogen metabolism; urea degradation; CO(2) and NH(3) from urea (urease route): step 1/1. The protein is Urease subunit alpha of Yersinia enterocolitica serotype O:8 / biotype 1B (strain NCTC 13174 / 8081).